The chain runs to 345 residues: MIKVGIVGGTGYTGVELLRILATHPEVELTAITSRKEDGLPVSDMFPSLRGRVDLAFSSPDKAKLTECDVVFFATPHGVAMAQAPELLAAGVKVIDLAADFRLQDTAAFEKWYKMPHSCPELLKEAAYGLVELNRDAIRKARIVGNPGCYPTTMQLGLAPLLKADVIDASHLIADCKSGVSGAGRKAEVSMLFAEAGDNFKAYGVSGHRHSPETVERLQILTGQKVGLLFAPHLVPMIRGMHSTMYARLTKEMDNAALQALFENAYASEPFVDVMPFGSHPETRSTRASNMLRIALHRPNDGDTIVILVVQDNLVKGASGQAVQCMNLMFGLPETTGLLHVPVLP.

Residue Cys149 is part of the active site.

Belongs to the NAGSA dehydrogenase family. Type 1 subfamily.

The protein localises to the cytoplasm. It carries out the reaction N-acetyl-L-glutamate 5-semialdehyde + phosphate + NADP(+) = N-acetyl-L-glutamyl 5-phosphate + NADPH + H(+). Its pathway is amino-acid biosynthesis; L-arginine biosynthesis; N(2)-acetyl-L-ornithine from L-glutamate: step 3/4. Functionally, catalyzes the NADPH-dependent reduction of N-acetyl-5-glutamyl phosphate to yield N-acetyl-L-glutamate 5-semialdehyde. The sequence is that of N-acetyl-gamma-glutamyl-phosphate reductase from Herminiimonas arsenicoxydans.